Consider the following 537-residue polypeptide: Eukaryotic translation initiation factor 3 subunit L (537 aa).

The 213-residue stretch at 300-512 folds into the PCI domain; it reads TFSSILLYIQ…IHIADTKVSH (213 aa).

Belongs to the eIF-3 subunit L family. As to quaternary structure, component of the eukaryotic translation initiation factor 3 (eIF-3) complex.

Its subcellular location is the cytoplasm. Functionally, component of the eukaryotic translation initiation factor 3 (eIF-3) complex, which is involved in protein synthesis of a specialized repertoire of mRNAs and, together with other initiation factors, stimulates binding of mRNA and methionyl-tRNAi to the 40S ribosome. The eIF-3 complex specifically targets and initiates translation of a subset of mRNAs involved in cell proliferation. The protein is Eukaryotic translation initiation factor 3 subunit L of Culex quinquefasciatus (Southern house mosquito).